The following is a 949-amino-acid chain: MAQQYQPGQRWISDSEAELGLGTVLAQDGRLLTVLYPATGDTRQYALRNAPLTRVRFSPGDSITHFEGWKMTVQEVDDVDGLLVYHGLNGQNEAVTLPETQLSNFIQFRLASDRLFAGQIDPLAWFSLRYHTLEHTSRQLQSSLWGLGGVRAQPIAHQLHIAREVADRIAPRVLLADEVGLGKTIEAGLVIHRQLLSGRASRVLILVPENLQHQWLVEMRRRFNLQVALFDEERFIESDASNPFEDTQLALVALEWLVDDEKAQDALFAAGWDLMVVDEAHHLVWHEDQVSPEYALVEQLAETIPGVLLLTATPEQLGQDSHFARLRLLDPNRFHDLAAFRAESENYRPVAEAVQELMDKGRLSPEAHKTIHGFLGNEGEALLAAVNDGDSEASARLVRELLDRHGTGRVLFRNTRAAVQGFPERKLHAYPLPCPDEYLELPLGEHAELYPEVSFQAQPDVSDDEQRWWKFDPRVEWLIDQLKMLKRTKVLVICAHAETAMDLEDALRVRSGIPATVFHEGMNILERDRAAAYFADEEFGAQVLICSEIGSEGRNFQFAHHLVLFDLPSHPDLLEQRIGRLDRIGQKHVIELHVPYLETSPQERLFQWYHEALNAFLNTCPTGNALQHQFGPRLLPLLENADDGEWQALIDAARGERERLEAELHTGRDRLLELNSGGAGEGDALVEAILEQDDQFALPIYMETLFDAFGIDSEDHSENALILKPSEKMLDASFPLGDDEGVTITYDRNQALSREDMQFITWEHPMVQGGMDLVLSGSMGNTAVALIKNKALKPGTVLLELLYVSEVVAPRSLQLGRYLPPAALRCLLDANGNDLSARVAFETLNDQLESVPKASANKFIQAQRDQLAPKINAGEAKVAPRHAERVAEAQRRLAADTDEELARLTALQAVNPTVRDSELVALRQQREQGLAMLEKAALRLEAIRVLVAG.

One can recognise a Helicase ATP-binding domain in the interval 164–332; it reads EVADRIAPRV…FARLRLLDPN (169 aa). An ATP-binding site is contributed by 177 to 184; the sequence is DEVGLGKT. The DEAH box motif lies at 278–281; it reads DEAH. A Helicase C-terminal domain is found at 474–628; it reads RVEWLIDQLK…TCPTGNALQH (155 aa).

Belongs to the SNF2/RAD54 helicase family. RapA subfamily. Interacts with the RNAP. Has a higher affinity for the core RNAP than for the holoenzyme. Its ATPase activity is stimulated by binding to RNAP.

In terms of biological role, transcription regulator that activates transcription by stimulating RNA polymerase (RNAP) recycling in case of stress conditions such as supercoiled DNA or high salt concentrations. Probably acts by releasing the RNAP, when it is trapped or immobilized on tightly supercoiled DNA. Does not activate transcription on linear DNA. Probably not involved in DNA repair. The protein is RNA polymerase-associated protein RapA of Pseudomonas fluorescens (strain ATCC BAA-477 / NRRL B-23932 / Pf-5).